The sequence spans 105 residues: Nucleoid-associated protein RPE_4812 (105 aa).

It belongs to the YbaB/EbfC family. In terms of assembly, homodimer.

The protein resides in the cytoplasm. It is found in the nucleoid. In terms of biological role, binds to DNA and alters its conformation. May be involved in regulation of gene expression, nucleoid organization and DNA protection. This Rhodopseudomonas palustris (strain BisA53) protein is Nucleoid-associated protein RPE_4812.